The primary structure comprises 113 residues: Ribonuclease P protein component (113 aa).

The protein belongs to the RnpA family. As to quaternary structure, consists of a catalytic RNA component (M1 or rnpB) and a protein subunit.

The catalysed reaction is Endonucleolytic cleavage of RNA, removing 5'-extranucleotides from tRNA precursor.. Its function is as follows. RNaseP catalyzes the removal of the 5'-leader sequence from pre-tRNA to produce the mature 5'-terminus. It can also cleave other RNA substrates such as 4.5S RNA. The protein component plays an auxiliary but essential role in vivo by binding to the 5'-leader sequence and broadening the substrate specificity of the ribozyme. The polypeptide is Ribonuclease P protein component (Clavibacter michiganensis subsp. michiganensis (strain NCPPB 382)).